A 317-amino-acid chain; its full sequence is L-lactate dehydrogenase 1 (317 aa).

NAD(+) contacts are provided by residues valine 17, aspartate 38, lysine 43, tyrosine 69, and 83–84 (GA). Glutamine 86 and arginine 92 together coordinate substrate. Residues serine 105, 122-124 (ATN), and serine 147 contribute to the NAD(+) site. 124 to 127 (NPVD) provides a ligand contact to substrate. A substrate-binding site is contributed by 152–155 (DSAR). Histidine 179 (proton acceptor) is an active-site residue. A Phosphotyrosine modification is found at tyrosine 223. Position 232 (threonine 232) interacts with substrate.

Belongs to the LDH/MDH superfamily. LDH family. Homotetramer.

It is found in the cytoplasm. It carries out the reaction (S)-lactate + NAD(+) = pyruvate + NADH + H(+). Its pathway is fermentation; pyruvate fermentation to lactate; (S)-lactate from pyruvate: step 1/1. Catalyzes the conversion of lactate to pyruvate (Potential). Appears to be the primary factor that allows S.aureus growth during nitrosative stress in both aerobically and anaerobically cultured cells. The polypeptide is L-lactate dehydrogenase 1 (Staphylococcus aureus (strain USA300)).